The chain runs to 277 residues: NH(3)-dependent NAD(+) synthetase (277 aa).

47-54 contacts ATP; sequence GISGGQDS. Residue aspartate 53 coordinates Mg(2+). Position 141 (arginine 141) interacts with deamido-NAD(+). An ATP-binding site is contributed by threonine 161. Residue glutamate 166 coordinates Mg(2+). Positions 174 and 181 each coordinate deamido-NAD(+). Residues lysine 190 and threonine 212 each coordinate ATP. 261–262 provides a ligand contact to deamido-NAD(+); the sequence is HK.

It belongs to the NAD synthetase family. Homodimer.

It carries out the reaction deamido-NAD(+) + NH4(+) + ATP = AMP + diphosphate + NAD(+) + H(+). It functions in the pathway cofactor biosynthesis; NAD(+) biosynthesis; NAD(+) from deamido-NAD(+) (ammonia route): step 1/1. Its function is as follows. Catalyzes the ATP-dependent amidation of deamido-NAD to form NAD. Uses ammonia as a nitrogen source. This Lactobacillus gasseri (strain ATCC 33323 / DSM 20243 / BCRC 14619 / CIP 102991 / JCM 1131 / KCTC 3163 / NCIMB 11718 / NCTC 13722 / AM63) protein is NH(3)-dependent NAD(+) synthetase.